Here is a 336-residue protein sequence, read N- to C-terminus: Dihydroorotate dehydrogenase (quinone) (336 aa).

Residues 62-66 (AGLDK) and threonine 86 contribute to the FMN site. Position 66 (lysine 66) interacts with substrate. Substrate is bound at residue 111–115 (NRMGF). Residues asparagine 139 and asparagine 172 each coordinate FMN. Substrate is bound at residue asparagine 172. Serine 175 serves as the catalytic Nucleophile. Asparagine 177 lines the substrate pocket. FMN-binding residues include lysine 217 and threonine 245. Position 246-247 (246-247 (NT)) interacts with substrate. Residues glycine 268, glycine 297, and 318-319 (YS) contribute to the FMN site.

Belongs to the dihydroorotate dehydrogenase family. Type 2 subfamily. As to quaternary structure, monomer. The cofactor is FMN.

The protein localises to the cell membrane. The enzyme catalyses (S)-dihydroorotate + a quinone = orotate + a quinol. Its pathway is pyrimidine metabolism; UMP biosynthesis via de novo pathway; orotate from (S)-dihydroorotate (quinone route): step 1/1. Catalyzes the conversion of dihydroorotate to orotate with quinone as electron acceptor. This Shigella flexneri serotype 5b (strain 8401) protein is Dihydroorotate dehydrogenase (quinone).